We begin with the raw amino-acid sequence, 779 residues long: Filament-like plant protein 1 (779 aa).

Positions 1–14 (MEKRKRESSERSFG) are enriched in basic and acidic residues. 3 disordered regions span residues 1–55 (MEKR…ETEK), 253–274 (ASFN…MDVS), and 315–336 (PETP…VVVP). A coiled-coil region spans residues 47–200 (VSLEVETEKE…KENVMLRHEL (154 aa)). Positions 256–272 (NDHRSTDSHSDGGERMD) are enriched in basic and acidic residues. Residues 324–336 (SGPESVTEEVVVP) are compositionally biased toward low complexity. Residues 337-674 (SENSLASEIE…ANCQKTIASL (338 aa)) are a coiled coil. Basic and acidic residues predominate over residues 718 to 731 (FMTRNHPESIKPTK). Residues 718–764 (FMTRNHPESIKPTKETSPSSSSSTASAAVSMPVSTNRGSSEKNRNGF) are disordered. Residues 733 to 752 (TSPSSSSSTASAAVSMPVST) show a composition bias toward low complexity.

This sequence belongs to the FPP family. Interacts with WPP/MAF proteins.

This chain is Filament-like plant protein 1 (FPP1), found in Arabidopsis thaliana (Mouse-ear cress).